The chain runs to 621 residues: Lamin-C (621 aa).

Residues 1-47 (MSARRVTLNTRVSRASTSTPVGGASTSSRVGATSPTSPTRTSRQQEK) are disordered. Residues 1–47 (MSARRVTLNTRVSRASTSTPVGGASTSSRVGATSPTSPTRTSRQQEK) form a head region. Over residues 7–31 (TLNTRVSRASTSTPVGGASTSSRVG) the composition is skewed to polar residues. Positions 33–42 (TSPTSPTRTS) are enriched in low complexity. A Phosphoserine modification is found at S34. Residues 46-402 (EKEELQHLND…KLLCGEERRL (357 aa)) enclose the IF rod domain. The coil 1A stretch occupies residues 47–85 (KEELQHLNDRLACYIDRMRNLENENSRLTQELNLAQDTV). The linker 1 stretch occupies residues 86–95 (NRETSNLKAV). A coil 1B region spans residues 96–233 (YEKELAAARK…QVHTQELTET (138 aa)). Residues 234 to 257 (RSRRQIEISEIDGRLSRQYEAKLQ) form a linker 2 region. The segment at 258-403 (QSLQELRDQY…LLCGEERRLN (146 aa)) is coil 2. Residues 404–458 (IESPGRPTTDSGISSNGSHLTASASSRSGRVTPSGRRSATPGISGSSAVKRRRTV) are disordered. Residues 404 to 621 (IESPGRPTTD…GVRSLFSLLF (218 aa)) are tail. Phosphoserine occurs at positions 406 and 441. A compositionally biased stretch (polar residues) spans 409-450 (RPTTDSGISSNGSHLTASASSRSGRVTPSGRRSATPGISGSS). At T443 the chain carries Phosphothreonine. A Nuclear localization signal motif is present at residues 453 to 458 (KRRRTV). In terms of domain architecture, LTD spans 468–582 (SEYSVNAAAK…EDVASYDRVR (115 aa)). The tract at residues 585-605 (VSSHTSRHRSSGTPSTGFTLG) is disordered.

This sequence belongs to the intermediate filament family. As to quaternary structure, interacts with MAN1. In terms of tissue distribution, first detected from late stage 12 in the oenocytes, abdominal segments, hindgut and posterior spiracles, with expression increasing in stage 13 (at protein level). In stage 14, also becomes detectable in the foregut (at protein level). Stage 15 shows expression in the epidermis, dorsal longitudinal trunk, pharynx, esophagus and proventriculus, with the dorsal pharyngeal musculature showing expression in late stage 15 (at protein level). In stage 16 embryos, also detected in the exit glia with increasing expression in the somatic musculature (at protein level). Also detected in the visceral mesoderm but not in the midgut or central nervous system until the end of embryogenesis (at protein level). In third instar larvae, detectable at varying levels in all cell types (at protein level). Expressed in spermatocytes (at protein level).

It is found in the nucleus. The protein resides in the nucleus lamina. Functionally, lamins are components of the nuclear lamina, a fibrous layer on the nucleoplasmic side of the inner nuclear membrane, which is thought to provide a framework for the nuclear envelope and may also interact with chromatin. In spermatocytes, regulates cytokinesis during meiosis. This is Lamin-C (LamC) from Drosophila melanogaster (Fruit fly).